The chain runs to 101 residues: NAD(P)H-quinone oxidoreductase subunit 4L, chloroplastic (101 aa).

3 helical membrane passes run 2–22 (MLEY…YGLI), 32–52 (MCLE…SYFF), and 61–81 (IFSI…LAIV).

It belongs to the complex I subunit 4L family. In terms of assembly, NDH is composed of at least 16 different subunits, 5 of which are encoded in the nucleus.

The protein resides in the plastid. Its subcellular location is the chloroplast thylakoid membrane. The catalysed reaction is a plastoquinone + NADH + (n+1) H(+)(in) = a plastoquinol + NAD(+) + n H(+)(out). It catalyses the reaction a plastoquinone + NADPH + (n+1) H(+)(in) = a plastoquinol + NADP(+) + n H(+)(out). Its function is as follows. NDH shuttles electrons from NAD(P)H:plastoquinone, via FMN and iron-sulfur (Fe-S) centers, to quinones in the photosynthetic chain and possibly in a chloroplast respiratory chain. The immediate electron acceptor for the enzyme in this species is believed to be plastoquinone. Couples the redox reaction to proton translocation, and thus conserves the redox energy in a proton gradient. This is NAD(P)H-quinone oxidoreductase subunit 4L, chloroplastic from Ipomoea purpurea (Common morning glory).